A 655-amino-acid polypeptide reads, in one-letter code: ATP-dependent zinc metalloprotease FtsH (655 aa).

At 1-17 (MPIETEPNRTRKNFEPK) the chain is on the cytoplasmic side. Residues 18 to 38 (RFGGSLFILFTLLLFLNLFVL) traverse the membrane as a helical segment. The Lumenal segment spans residues 39 to 124 (RGPRFPITAY…APPPSSLSWL (86 aa)). Residues 125–145 (PTLLGWVVPPLIFFGIWSWLI) traverse the membrane as a helical segment. The Cytoplasmic segment spans residues 146 to 655 (NRNQGAGPAA…LNSHQLIGIN (510 aa)). ATP is bound at residue 216–223 (GPPGTGKT). Position 440 (histidine 440) interacts with Zn(2+). The active site involves glutamate 441. Residues histidine 444 and aspartate 517 each coordinate Zn(2+).

This sequence in the central section; belongs to the AAA ATPase family. The protein in the C-terminal section; belongs to the peptidase M41 family. Homohexamer. It depends on Zn(2+) as a cofactor.

The protein resides in the cellular thylakoid membrane. In terms of biological role, acts as a processive, ATP-dependent zinc metallopeptidase for both cytoplasmic and membrane proteins. Plays a role in the quality control of integral membrane proteins. The chain is ATP-dependent zinc metalloprotease FtsH from Acaryochloris marina (strain MBIC 11017).